A 92-amino-acid polypeptide reads, in one-letter code: MVVTTSDVVMCQMRRSDVQGGYRVYGSWMAENVQDQVSILNQKLSEFAPSMPHAVRSDVINNRLQNLHLHAHHFLIRRHQLITHLNPHLHRN.

The protein belongs to the 'phage' integrase family.

This chain is Putative protein IntG (intG), found in Escherichia coli (strain K12).